We begin with the raw amino-acid sequence, 232 residues long: Ovalbumin-related protein X (232 aa).

Belongs to the serpin family. Ov-serpin subfamily. Expressed in egg white (at protein level).

This chain is Ovalbumin-related protein X (SERPINB14C), found in Gallus gallus (Chicken).